Reading from the N-terminus, the 60-residue chain is Cecropin-B1 (60 aa).

Positions 1–24 (MNFSKVFALVLLIGLVLLTGHTEA) are cleaved as a signal peptide.

It belongs to the cecropin family.

It localises to the secreted. Functionally, putative antimicrobial peptide. Partially neutralizes lipopolysaccharides (LPS). Exhibits anti-inflammatory properties: inhibits LPS-induced iNOS/NOS2 transcription, nitric oxide (NO) and pro-inflammatory cytokine production in mouse macrophages and human peripheral blood mononuclear cells (PBMCs); inhibits LPS-induced activation of MAPK and NF-kappa-B signaling pathways in mouse macrophages. The protein is Cecropin-B1 of Aedes aegypti (Yellowfever mosquito).